A 160-amino-acid chain; its full sequence is Phosphopantetheine adenylyltransferase (160 aa).

Ser10 is a substrate binding site. Residues Ser10–Phe11 and His18 contribute to the ATP site. The substrate site is built by Lys42, Leu74, and Arg88. ATP contacts are provided by residues Gly89–Arg91, Glu99, and Tyr124–Ser130.

It belongs to the bacterial CoaD family. As to quaternary structure, homohexamer. Mg(2+) serves as cofactor.

It localises to the cytoplasm. It carries out the reaction (R)-4'-phosphopantetheine + ATP + H(+) = 3'-dephospho-CoA + diphosphate. The protein operates within cofactor biosynthesis; coenzyme A biosynthesis; CoA from (R)-pantothenate: step 4/5. Functionally, reversibly transfers an adenylyl group from ATP to 4'-phosphopantetheine, yielding dephospho-CoA (dPCoA) and pyrophosphate. The chain is Phosphopantetheine adenylyltransferase from Bacillus pumilus (strain SAFR-032).